Reading from the N-terminus, the 29-residue chain is Cyclotide mden-C (29 aa).

Positions 1-29 form a cross-link, cyclopeptide (Gly-Asn); that stretch reads GKPICGETCFKGKCYTPGCTCSYPVCKKN. 3 disulfides stabilise this stretch: cysteine 5–cysteine 19, cysteine 9–cysteine 21, and cysteine 14–cysteine 26.

It belongs to the cyclotide family. In terms of processing, this is a cyclic peptide.

In terms of biological role, probably participates in a plant defense mechanism. The sequence is that of Cyclotide mden-C from Melicytus dentatus (Tree violet).